The following is a 44-amino-acid chain: Protein PsbN (44 aa).

The chain crosses the membrane as a helical span at residues 6–26; that stretch reads FFYGVFLWCLLISVTGYSIYI.

This sequence belongs to the PsbN family.

The protein resides in the plastid. Its subcellular location is the chloroplast thylakoid membrane. In terms of biological role, may play a role in photosystem I and II biogenesis. In Ostreococcus tauri, this protein is Protein PsbN.